The sequence spans 581 residues: Pyridine nucleotide-disulfide oxidoreductase domain-containing protein 2 (581 aa).

FAD is bound at residue 38–71 (VVIGAGHNGLVAAAYLQRLGVNTAVFERRHVIGG).

Belongs to the carotenoid/retinoid oxidoreductase family. As to quaternary structure, interacts with COX5B; this interaction may contribute to localize PYROXD2 to the inner face of the inner mitochondrial membrane.

The protein localises to the mitochondrion matrix. Its function is as follows. Probable oxidoreductase that may play a role as regulator of mitochondrial function. In Homo sapiens (Human), this protein is Pyridine nucleotide-disulfide oxidoreductase domain-containing protein 2.